The chain runs to 83 residues: uncharacterized protein (83 aa).

Belongs to the chlamydial CPn_0710/CT_666/TC_0037 family.

This is an uncharacterized protein from Chlamydia trachomatis serovar D (strain ATCC VR-885 / DSM 19411 / UW-3/Cx).